The following is a 163-amino-acid chain: SsrA-binding protein (163 aa).

Basic and acidic residues predominate over residues 140 to 157 (RRGAIAERESKREMDRAL). Residues 140-163 (RRGAIAERESKREMDRALARGRRR) form a disordered region.

It belongs to the SmpB family.

The protein localises to the cytoplasm. In terms of biological role, required for rescue of stalled ribosomes mediated by trans-translation. Binds to transfer-messenger RNA (tmRNA), required for stable association of tmRNA with ribosomes. tmRNA and SmpB together mimic tRNA shape, replacing the anticodon stem-loop with SmpB. tmRNA is encoded by the ssrA gene; the 2 termini fold to resemble tRNA(Ala) and it encodes a 'tag peptide', a short internal open reading frame. During trans-translation Ala-aminoacylated tmRNA acts like a tRNA, entering the A-site of stalled ribosomes, displacing the stalled mRNA. The ribosome then switches to translate the ORF on the tmRNA; the nascent peptide is terminated with the 'tag peptide' encoded by the tmRNA and targeted for degradation. The ribosome is freed to recommence translation, which seems to be the essential function of trans-translation. This Anaeromyxobacter dehalogenans (strain 2CP-C) protein is SsrA-binding protein.